Reading from the N-terminus, the 359-residue chain is Phosphate acyltransferase (359 aa).

The interval Ser335–Ala359 is disordered.

It belongs to the PlsX family. Homodimer. Probably interacts with PlsY.

Its subcellular location is the cytoplasm. The catalysed reaction is a fatty acyl-[ACP] + phosphate = an acyl phosphate + holo-[ACP]. Its pathway is lipid metabolism; phospholipid metabolism. Its function is as follows. Catalyzes the reversible formation of acyl-phosphate (acyl-PO(4)) from acyl-[acyl-carrier-protein] (acyl-ACP). This enzyme utilizes acyl-ACP as fatty acyl donor, but not acyl-CoA. In Cupriavidus metallidurans (strain ATCC 43123 / DSM 2839 / NBRC 102507 / CH34) (Ralstonia metallidurans), this protein is Phosphate acyltransferase.